Reading from the N-terminus, the 94-residue chain is MKITPKNILRHELIGLEACVVKSKNPSQVGICGLILDETYKTIVIGVPGGPKKRIFKAQVVLRIKLPDGKELLVDGAFLVGRPEERLKRRVMLW.

The protein belongs to the eukaryotic/archaeal RNase P protein component 1 family. As to quaternary structure, consists of a catalytic RNA component and at least 4-5 protein subunits.

Its subcellular location is the cytoplasm. The enzyme catalyses Endonucleolytic cleavage of RNA, removing 5'-extranucleotides from tRNA precursor.. Its function is as follows. Part of ribonuclease P, a protein complex that generates mature tRNA molecules by cleaving their 5'-ends. This Thermofilum pendens (strain DSM 2475 / Hrk 5) protein is Ribonuclease P protein component 1.